A 674-amino-acid chain; its full sequence is U-box domain-containing protein 16 (674 aa).

A U-box domain is found at 273-347; sequence NIPADFRCPI…VLWCRDQKIP (75 aa). 3 ARM repeats span residues 399–438, 441–481, and 484–523; these read TVARACIAEAGAIPKLVRYLATECPSLQINAVTTILNLSI, QNKT…SLAG, and AYRRRLGRKARVVSGLVDLAKQGPTSSKRDALVAILNLVA.

The catalysed reaction is S-ubiquitinyl-[E2 ubiquitin-conjugating enzyme]-L-cysteine + [acceptor protein]-L-lysine = [E2 ubiquitin-conjugating enzyme]-L-cysteine + N(6)-ubiquitinyl-[acceptor protein]-L-lysine.. It functions in the pathway protein modification; protein ubiquitination. In terms of biological role, functions as an E3 ubiquitin ligase. The polypeptide is U-box domain-containing protein 16 (PUB16) (Arabidopsis thaliana (Mouse-ear cress)).